Reading from the N-terminus, the 447-residue chain is MGKEKFHINIVVIGHVDSGKSTTTGHLIYKLGGIDKRVIERFEKEAAEMNKRSFKYAWVLDKLKAERERGITIDIALWKFETTKYYCTVIDAPGHRDFIKNMITGTSQADCAVLIIDSTTGGFEAGISKDGQTREHALLAFTLGVKQMICCCNKMDATTPKYSKARYDEIVKEVSSYLKKVGYNPDKIPFVPISGFEGDNMIERSTNLDWYKGPTLLEALDQINDAKRPSDKPLRLPLQDVYKIGGIGTVPVGRVETGVLKPGMVVTFGPTGLTTEVKSVEMHHEALQEALPGDNVGFNVKNVAVKDLKRGFVASNSKDDPAKGAASFTSQVIIMNHPGQIGNGYAPVLDCHTSHIAVKFAEILTKIDRRSGKEIEKEPKFLKNGDAGMVKMIPTKPMVVETFSEYPPLGRFAVRDMRQTVAVGVIKNVDKKDPTGAKVTKAAQKKK.

Residues 5–230 enclose the tr-type G domain; that stretch reads KFHINIVVIG…DQINDAKRPS (226 aa). The G1 stretch occupies residues 14–21; it reads GHVDSGKS. Position 14–21 (14–21) interacts with GTP; the sequence is GHVDSGKS. An N6,N6-dimethyllysine modification is found at Lys55. Residues 70 to 74 form a G2 region; that stretch reads GITID. An N6,N6,N6-trimethyllysine modification is found at Lys79. Residues 91–94 are G3; sequence DAPG. GTP contacts are provided by residues 91 to 95 and 153 to 156; these read DAPGH and NKMD. The G4 stretch occupies residues 153–156; the sequence is NKMD. At Lys187 the chain carries N6,N6,N6-trimethyllysine. Residues 194-196 form a G5 region; the sequence is SGF. The residue at position 261 (Lys261) is an N6-methyllysine. Glu289 is subject to 5-glutamyl glycerylphosphorylethanolamine. Lys306 bears the N6,N6,N6-trimethyllysine mark. Glu362 bears the 5-glutamyl glycerylphosphorylethanolamine mark. N6,N6,N6-trimethyllysine is present on Lys396.

This sequence belongs to the TRAFAC class translation factor GTPase superfamily. Classic translation factor GTPase family. EF-Tu/EF-1A subfamily. As to expression, was detected in all tissues examined but was most abundant in roots and salt-adapted cultured cells.

It is found in the cytoplasm. In terms of biological role, this protein promotes the GTP-dependent binding of aminoacyl-tRNA to the A-site of ribosomes during protein biosynthesis. The polypeptide is Elongation factor 1-alpha (Nicotiana tabacum (Common tobacco)).